Consider the following 67-residue polypeptide: SPbeta prophage-derived uncharacterized protein YopZ (67 aa).

The stretch at 1 to 40 forms a coiled coil; it reads MTSEMQLQAQIDVIEKENKELRRRNEELGQTVECQNKQIV. Residues 44-66 traverse the membrane as a helical segment; sequence WRLLFFASSWIVYGIVSAIKYLW.

It is found in the cell membrane. The polypeptide is SPbeta prophage-derived uncharacterized protein YopZ (yopZ) (Bacillus subtilis (strain 168)).